The following is a 290-amino-acid chain: Elongation factor Ts (290 aa).

The tract at residues 87–90 (TDFV) is involved in Mg(2+) ion dislocation from EF-Tu.

The protein belongs to the EF-Ts family.

The protein localises to the cytoplasm. Associates with the EF-Tu.GDP complex and induces the exchange of GDP to GTP. It remains bound to the aminoacyl-tRNA.EF-Tu.GTP complex up to the GTP hydrolysis stage on the ribosome. This is Elongation factor Ts (tsf) from Treponema pallidum (strain Nichols).